Here is a 491-residue protein sequence, read N- to C-terminus: MVRRLRGDCMEEVERAKAVLKENNVRQVLCAFADVRGYLQMFSIPAREFVDGSAFENGIGFDGSSVRGFRTIEKSDMVWMPDASSLKIIPWIDDPIQKSAIMFGNVYEAWGTEIADCDPRGYVAKRYEDMLKSEGMSAIFGPEIEFFLFEGVDFTRLSWDMWVSPNGGAGDSWGPPRIMPISSELESGYMIRPKEGYFRPPPEDTTVEYRNELVYYLEQLGIDIEYHHHEVATAGQVELDFKPKQLVDVGDAFYLYKFAAKNIAAMHGLYATFMPKPLYLDNASGMHTHQSLWKGEPFSGEAVFADPDDEYMLSQKARYYIGGLLEHAKALTALCAPTVNSYKRLVPGFEAPIYICWSPRNRSALVRVPMYVKKPSAIRVEYRGVDPSCNPYLAITAQLAAGLDGIKKKIDPGDPLLEDVYELTPAQKRELGVGELPTTLRDAIDHLASDELMQEVLGSHIFDAFMELKIDEWNQYCLYITPWEFMKYFDI.

Residues 23 to 111 (NNVRQVLCAF…MFGNVYEAWG (89 aa)) enclose the GS beta-grasp domain. One can recognise a GS catalytic domain in the interval 119-491 (PRGYVAKRYE…PWEFMKYFDI (373 aa)). The Mg(2+) site is built by E143 and E145. An ATP-binding site is contributed by E225. Mg(2+) is bound by residues E230 and E238. L-glutamate contacts are provided by residues 282–283 (NA) and A283. H287 contributes to the Mg(2+) binding site. Residues 289 to 291 (HQS) and S291 contribute to the ATP site. Residues R344, E350, and R362 each coordinate L-glutamate. ATP-binding residues include R362 and R367. A Mg(2+)-binding site is contributed by E381. L-glutamate is bound at residue R383.

The protein belongs to the glutamine synthetase family. Oligomer of 12 subunits arranged in the form of two hexagons. Mg(2+) serves as cofactor.

It is found in the cytoplasm. It carries out the reaction L-glutamate + NH4(+) + ATP = L-glutamine + ADP + phosphate + H(+). In terms of biological role, probably involved in nitrogen metabolism via ammonium assimilation. Catalyzes the ATP-dependent biosynthesis of glutamine from glutamate and ammonia. Beta-glutamate is a much poorer substrate than alpha-glutamate. This is Glutamine synthetase from Archaeoglobus fulgidus (strain ATCC 49558 / DSM 4304 / JCM 9628 / NBRC 100126 / VC-16).